An 84-amino-acid polypeptide reads, in one-letter code: Exodeoxyribonuclease 7 small subunit (84 aa).

This sequence belongs to the XseB family. Heterooligomer composed of large and small subunits.

The protein resides in the cytoplasm. The enzyme catalyses Exonucleolytic cleavage in either 5'- to 3'- or 3'- to 5'-direction to yield nucleoside 5'-phosphates.. Its function is as follows. Bidirectionally degrades single-stranded DNA into large acid-insoluble oligonucleotides, which are then degraded further into small acid-soluble oligonucleotides. The chain is Exodeoxyribonuclease 7 small subunit from Bartonella bacilliformis (strain ATCC 35685 / KC583 / Herrer 020/F12,63).